The sequence spans 127 residues: Large ribosomal subunit protein eL18 (127 aa).

Belongs to the eukaryotic ribosomal protein eL18 family.

The protein is Large ribosomal subunit protein eL18 of Methanopyrus kandleri (strain AV19 / DSM 6324 / JCM 9639 / NBRC 100938).